Reading from the N-terminus, the 199-residue chain is NADH-quinone oxidoreductase subunit C (199 aa).

Belongs to the complex I 30 kDa subunit family. In terms of assembly, NDH-1 is composed of 14 different subunits. Subunits NuoB, C, D, E, F, and G constitute the peripheral sector of the complex.

It is found in the cell inner membrane. It catalyses the reaction a quinone + NADH + 5 H(+)(in) = a quinol + NAD(+) + 4 H(+)(out). Functionally, NDH-1 shuttles electrons from NADH, via FMN and iron-sulfur (Fe-S) centers, to quinones in the respiratory chain. The immediate electron acceptor for the enzyme in this species is believed to be ubiquinone. Couples the redox reaction to proton translocation (for every two electrons transferred, four hydrogen ions are translocated across the cytoplasmic membrane), and thus conserves the redox energy in a proton gradient. The protein is NADH-quinone oxidoreductase subunit C of Cupriavidus metallidurans (strain ATCC 43123 / DSM 2839 / NBRC 102507 / CH34) (Ralstonia metallidurans).